The primary structure comprises 353 residues: UPF0283 membrane protein YcjF (353 aa).

The span at Met1–Pro19 shows a compositional bias: basic and acidic residues. Positions Met1 to Arg35 are disordered. 3 helical membrane-spanning segments follow: residues Met70–Thr90, Val100–Val120, and Glu213–Trp233.

This sequence belongs to the UPF0283 family.

Its subcellular location is the cell inner membrane. This Salmonella dublin (strain CT_02021853) protein is UPF0283 membrane protein YcjF.